Reading from the N-terminus, the 260-residue chain is 5'-nucleotidase SurE (260 aa).

Residues Asp13, Asp14, Ser44, and Asn102 each coordinate a divalent metal cation.

Belongs to the SurE nucleotidase family. Requires a divalent metal cation as cofactor.

Its subcellular location is the cytoplasm. It catalyses the reaction a ribonucleoside 5'-phosphate + H2O = a ribonucleoside + phosphate. In terms of biological role, nucleotidase that shows phosphatase activity on nucleoside 5'-monophosphates. The chain is 5'-nucleotidase SurE from Christiangramia forsetii (strain DSM 17595 / CGMCC 1.15422 / KT0803) (Gramella forsetii).